The primary structure comprises 50 residues: Capsid protein G8P (50 aa).

Residues 1-21 lie on the Periplasmic side of the membrane; sequence AEGDDPAKAAFDSLQASATEY. The chain crosses the membrane as a helical span at residues 22-42; it reads IGYAWAMVVVIVGATIGIKLF. The Cytoplasmic portion of the chain corresponds to 43 to 50; the sequence is KKFASKAS.

It belongs to the inovirus capsid protein family. As to quaternary structure, homomultimerizes. There are several thousands of this protein in the phage capsid.

Its subcellular location is the virion. It is found in the host membrane. Functionally, self assembles to form a helical capsid wrapping up the viral genomic DNA. The capsid displays a filamentous structure with a length of 760-1950 nm and a width of 6-8 nm. The virion assembly and budding take place at the host inner membrane. The protein is Capsid protein G8P (VIII) of Escherichia coli (Bacteriophage ZJ-2).